We begin with the raw amino-acid sequence, 915 residues long: Probable LRR receptor-like serine/threonine-protein kinase At2g16250 (915 aa).

The N-terminal stretch at 1 to 28 (MVDQRRSALGFVLLLLCLVLFFDCVVVG) is a signal peptide. Over 29–451 (QTQSRFSEKL…ISRRTVIILA (423 aa)) the chain is Extracellular. Residues N71, N78, N101, N109, N150, N158, and N177 are each glycosylated (N-linked (GlcNAc...) asparagine). 11 LRR repeats span residues 102–125 (LTRL…WFGV), 127–150 (LLAL…TLGN), 151–174 (LTSL…SLGQ), 176–198 (LNLS…SFSS), 199–223 (LKNL…LGAL), 225–247 (KLIH…LGDL), 248–271 (VNLV…LRKL), 272–295 (SKLQ…LFSA), 297–320 (SQLQ…CWSL), 321–344 (PKLR…SYDS), and 366–390 (LRRF…VTGE). Residue N230 is glycosylated (N-linked (GlcNAc...) asparagine). An N-linked (GlcNAc...) asparagine glycan is attached at N332. Residues N391, N429, and N437 are each glycosylated (N-linked (GlcNAc...) asparagine). Residues 452–472 (AVGGGVAFILLFVILPIILVL) form a helical membrane-spanning segment. The Cytoplasmic portion of the chain corresponds to 473 to 915 (CMRHRRRAAQ…AAYGVVEDNL (443 aa)). A disordered region spans residues 482–503 (QRGNNDRPKPAGEASQQPPKGA). The Protein kinase domain maps to 527-811 (FNDANLIKRG…IVNALENPLK (285 aa)). ATP-binding positions include 533–541 (IKRGHSGNL) and K555. The active-site Proton acceptor is the D657. The segment at 851-915 (TAVQAGATTS…AAYGVVEDNL (65 aa)) is disordered. A compositionally biased stretch (gly residues) spans 859–870 (TSGGGGGGGGNG). Over residues 871–892 (LRNSGSQGSSGRNNNNNGNSSS) the composition is skewed to low complexity.

Belongs to the protein kinase superfamily. Ser/Thr protein kinase family.

Its subcellular location is the membrane. The enzyme catalyses L-seryl-[protein] + ATP = O-phospho-L-seryl-[protein] + ADP + H(+). It carries out the reaction L-threonyl-[protein] + ATP = O-phospho-L-threonyl-[protein] + ADP + H(+). This chain is Probable LRR receptor-like serine/threonine-protein kinase At2g16250, found in Arabidopsis thaliana (Mouse-ear cress).